We begin with the raw amino-acid sequence, 337 residues long: Phosphatidate cytidylyltransferase, mitochondrial (337 aa).

Belongs to the TAM41 family. Requires Mg(2+) as cofactor.

It is found in the mitochondrion inner membrane. It catalyses the reaction a 1,2-diacyl-sn-glycero-3-phosphate + CTP + H(+) = a CDP-1,2-diacyl-sn-glycerol + diphosphate. Its pathway is phospholipid metabolism; CDP-diacylglycerol biosynthesis; CDP-diacylglycerol from sn-glycerol 3-phosphate: step 3/3. In terms of biological role, catalyzes the conversion of phosphatidic acid (PA) to CDP-diacylglycerol (CDP-DAG), an essential intermediate in the synthesis of phosphatidylglycerol, cardiolipin and phosphatidylinositol. The chain is Phosphatidate cytidylyltransferase, mitochondrial (Tamm41) from Mus musculus (Mouse).